The sequence spans 92 residues: Neurophysin 2 (92 aa).

Intrachain disulfides connect C7-C51, C10-C24, C18-C41, C25-C31, C58-C70, C64-C82, and C71-C76.

Belongs to the vasopressin/oxytocin family.

It is found in the secreted. Functionally, neurophysin 2 specifically binds the midbrain peptide hormone vasopressin. This chain is Neurophysin 2 (AVP), found in Equus caballus (Horse).